Consider the following 412-residue polypeptide: Exodeoxyribonuclease 7 large subunit (412 aa).

This sequence belongs to the XseA family. In terms of assembly, heterooligomer composed of large and small subunits.

The protein resides in the cytoplasm. The catalysed reaction is Exonucleolytic cleavage in either 5'- to 3'- or 3'- to 5'-direction to yield nucleoside 5'-phosphates.. Bidirectionally degrades single-stranded DNA into large acid-insoluble oligonucleotides, which are then degraded further into small acid-soluble oligonucleotides. This Nostoc sp. (strain PCC 7120 / SAG 25.82 / UTEX 2576) protein is Exodeoxyribonuclease 7 large subunit.